The sequence spans 275 residues: MSNQELEAAIEAAWDARDSITPATTGATREAIEETLAALDGGGLRVAEKQADGSWHVNQWAKKAVLLGFRIKDMEIQSGGPQGGGWWDKVDSKFAGWGESQWKAAGFRAVPNCVVRKSAYIAPGVVLMPSFVNLGAYVDSGTMVDTWATVGSCAQIGRNVHLSGGVGIGGVLEPMQAGPTIIEDNCFIGARSEVVEGVIVREGAVLGMGVYIGQSTKIVDRETGEVMYGEVPPYSVVVSGSMPSTGGVSLYCAVIVKRVDERTRSKTGINELLRD.

Substrate contacts are provided by Arg108 and Asp145.

Belongs to the transferase hexapeptide repeat family. As to quaternary structure, homotrimer.

The protein resides in the cytoplasm. The catalysed reaction is (S)-2,3,4,5-tetrahydrodipicolinate + succinyl-CoA + H2O = (S)-2-succinylamino-6-oxoheptanedioate + CoA. It functions in the pathway amino-acid biosynthesis; L-lysine biosynthesis via DAP pathway; LL-2,6-diaminopimelate from (S)-tetrahydrodipicolinate (succinylase route): step 1/3. The protein is 2,3,4,5-tetrahydropyridine-2,6-dicarboxylate N-succinyltransferase of Ruegeria pomeroyi (strain ATCC 700808 / DSM 15171 / DSS-3) (Silicibacter pomeroyi).